Reading from the N-terminus, the 464-residue chain is Soluble pyridine nucleotide transhydrogenase (464 aa).

Position 35-44 (35-44 (DSRRQVGGNC)) interacts with FAD.

Belongs to the class-I pyridine nucleotide-disulfide oxidoreductase family. It depends on FAD as a cofactor.

It is found in the cytoplasm. It catalyses the reaction NAD(+) + NADPH = NADH + NADP(+). In terms of biological role, conversion of NADPH, generated by peripheral catabolic pathways, to NADH, which can enter the respiratory chain for energy generation. The polypeptide is Soluble pyridine nucleotide transhydrogenase (Pseudomonas entomophila (strain L48)).